Here is a 284-residue protein sequence, read N- to C-terminus: Pantothenate synthetase (284 aa).

30–37 (MGFLHEGH) lines the ATP pocket. His37 (proton donor) is an active-site residue. Gln61 serves as a coordination point for (R)-pantoate. Gln61 provides a ligand contact to beta-alanine. 147–150 (GRKD) contacts ATP. Position 153 (Gln153) interacts with (R)-pantoate. ATP-binding positions include Val176 and 184 to 187 (MSSR).

This sequence belongs to the pantothenate synthetase family. In terms of assembly, homodimer.

It localises to the cytoplasm. It carries out the reaction (R)-pantoate + beta-alanine + ATP = (R)-pantothenate + AMP + diphosphate + H(+). It functions in the pathway cofactor biosynthesis; (R)-pantothenate biosynthesis; (R)-pantothenate from (R)-pantoate and beta-alanine: step 1/1. Its function is as follows. Catalyzes the condensation of pantoate with beta-alanine in an ATP-dependent reaction via a pantoyl-adenylate intermediate. This is Pantothenate synthetase from Pelobacter propionicus (strain DSM 2379 / NBRC 103807 / OttBd1).